The chain runs to 77 residues: uncharacterized protein (77 aa).

An HTH cro/C1-type domain is found at 13-67; that stretch reads VLQYMVNNDYSLNQLALEIGVSPATLSRVLNGERRPGQLVIGKMLHYFNLKFEDL. The segment at residues 24–43 is a DNA-binding region (H-T-H motif); the sequence is LNQLALEIGVSPATLSRVLN.

It is found in the cytoplasm. This is an uncharacterized protein from Bacillus subtilis (strain 168).